The following is a 96-amino-acid chain: 2Fe-2S ferredoxin-5 (96 aa).

The 2Fe-2S ferredoxin-type domain maps to 2–96; that stretch reads PKVIVANINA…GKGDVVIYLP (95 aa). Residues cysteine 36, cysteine 42, cysteine 45, and cysteine 81 each coordinate [2Fe-2S] cluster.

The protein belongs to the adrenodoxin/putidaredoxin family. It depends on [2Fe-2S] cluster as a cofactor.

Functionally, may be involved in the assembly of iron-sulfur clusters (Isc-Fd). This chain is 2Fe-2S ferredoxin-5 (fdx5), found in Aquifex aeolicus (strain VF5).